Reading from the N-terminus, the 324-residue chain is COP9 signalosome complex subunit 6 (324 aa).

An MPN domain is found at 38 to 171 (VALHPLVILN…VSVFESVIDI (134 aa)).

The protein belongs to the peptidase M67A family. CSN6 subfamily. As to quaternary structure, component of the CSN complex, composed of COPS1/GPS1, COPS2, COPS3, COPS4, COPS5, COPS6, COPS7 (COPS7A or COPS7B), COPS8 and COPS9. In the complex, it probably interacts directly with COPS2, COPS4, COPS5, COPS7 (COPS7A or COPS7B) and COPS9. Interacts with the translation initiation factor EIF3S6. Interacts weakly with RBX1. Directly interacts with COP1 and 14-3-3 protein sigma/SFN. Interacts with ERCC6.

It is found in the cytoplasm. The protein resides in the nucleus. Functionally, component of the COP9 signalosome complex (CSN), a complex involved in various cellular and developmental processes. The CSN complex is an essential regulator of the ubiquitin (Ubl) conjugation pathway by mediating the deneddylation of the cullin subunits of SCF-type E3 ligase complexes, leading to decrease the Ubl ligase activity of SCF-type complexes such as SCF, CSA or DDB2. The complex is also involved in phosphorylation of p53/TP53, c-jun/JUN, IkappaBalpha/NFKBIA, ITPK1 and IRF8, possibly via its association with CK2 and PKD kinases. CSN-dependent phosphorylation of TP53 and JUN promotes and protects degradation by the Ubl system, respectively. Has some glucocorticoid receptor-responsive activity. Stabilizes COP1 through reducing COP1 auto-ubiquitination and decelerating COP1 turnover rate, hence regulates the ubiquitination of COP1 targets, including SFN. The polypeptide is COP9 signalosome complex subunit 6 (COPS6) (Bos taurus (Bovine)).